The sequence spans 157 residues: Large ribosomal subunit protein eL24 (157 aa).

Lys2 is covalently cross-linked (Glycyl lysine isopeptide (Lys-Gly) (interchain with G-Cter in SUMO2)). The residue at position 4 (Glu4) is an ADP-ribosyl glutamic acid. Lys27 carries the N6-acetyllysine; alternate modification. Residue Lys27 forms a Glycyl lysine isopeptide (Lys-Gly) (interchain with G-Cter in SUMO2); alternate linkage. Lys35 participates in a covalent cross-link: Glycyl lysine isopeptide (Lys-Gly) (interchain with G-Cter in SUMO2). Lys77 is subject to N6-acetyllysine. Thr83 bears the Phosphothreonine mark. Ser86 bears the Phosphoserine mark. Residue Lys93 is modified to N6-acetyllysine. The segment covering 106 to 117 (EQAIRAAKEAKK) has biased composition (basic and acidic residues). The tract at residues 106 to 157 (EQAIRAAKEAKKAKQASKKTAMAAAKAPTKAAPKQKIVKPVKVSAPRVGGKR) is disordered. The span at 123–140 (KKTAMAAAKAPTKAAPKQ) shows a compositional bias: low complexity. Lys131 is subject to N6-succinyllysine. Lys147 participates in a covalent cross-link: Glycyl lysine isopeptide (Lys-Gly) (interchain with G-Cter in SUMO2). Position 149 is a phosphoserine (Ser149).

Belongs to the eukaryotic ribosomal protein eL24 family. In terms of assembly, component of the large ribosomal subunit. Post-translationally, mono-ADP-ribosylation at Glu-4 by PARP16 inhibits polysome assembly and mRNA loading, thereby inhibiting protein translation.

It localises to the cytoplasm. Functionally, component of the large ribosomal subunit. The ribosome is a large ribonucleoprotein complex responsible for the synthesis of proteins in the cell. The protein is Large ribosomal subunit protein eL24 (RPL24) of Bos taurus (Bovine).